The following is a 110-amino-acid chain: Large ribosomal subunit protein uL22 (110 aa).

Belongs to the universal ribosomal protein uL22 family. Part of the 50S ribosomal subunit.

Functionally, this protein binds specifically to 23S rRNA; its binding is stimulated by other ribosomal proteins, e.g. L4, L17, and L20. It is important during the early stages of 50S assembly. It makes multiple contacts with different domains of the 23S rRNA in the assembled 50S subunit and ribosome. Its function is as follows. The globular domain of the protein is located near the polypeptide exit tunnel on the outside of the subunit, while an extended beta-hairpin is found that lines the wall of the exit tunnel in the center of the 70S ribosome. The protein is Large ribosomal subunit protein uL22 of Nitrosococcus oceani (strain ATCC 19707 / BCRC 17464 / JCM 30415 / NCIMB 11848 / C-107).